A 200-amino-acid polypeptide reads, in one-letter code: uncharacterized protein (200 aa).

Residues 1–21 (MSNSAQRDARNSRDESARASD) form a disordered region. Basic and acidic residues predominate over residues 7–21 (RDARNSRDESARASD).

This is an uncharacterized protein from Mycobacterium tuberculosis (strain ATCC 25618 / H37Rv).